The chain runs to 146 residues: Hemoglobin subunit beta (146 aa).

The 145-residue stretch at H2 to H146 folds into the Globin domain. Residues H63 and H92 each contribute to the heme b site.

It belongs to the globin family. In terms of assembly, heterotetramer of two alpha chains and two beta chains. As to expression, red blood cells.

In terms of biological role, involved in oxygen transport from the lung to the various peripheral tissues. This is Hemoglobin subunit beta (HBB) from Aegypius monachus (Cinereous vulture).